The following is a 394-amino-acid chain: Elongation factor Tu (394 aa).

A tr-type G domain is found at 10–204 (KPHVNVGTIG…ALDSYIPEPE (195 aa)). Positions 19–26 (GHVDHGKT) are G1. 19-26 (GHVDHGKT) serves as a coordination point for GTP. T26 is a binding site for Mg(2+). A G2 region spans residues 60-64 (GITIN). A G3 region spans residues 81 to 84 (DCPG). GTP-binding positions include 81–85 (DCPGH) and 136–139 (NKCD). The interval 136–139 (NKCD) is G4. Residues 174 to 176 (SAL) form a G5 region.

The protein belongs to the TRAFAC class translation factor GTPase superfamily. Classic translation factor GTPase family. EF-Tu/EF-1A subfamily. As to quaternary structure, monomer.

The protein resides in the cytoplasm. It catalyses the reaction GTP + H2O = GDP + phosphate + H(+). GTP hydrolase that promotes the GTP-dependent binding of aminoacyl-tRNA to the A-site of ribosomes during protein biosynthesis. In Shewanella sp. (strain ANA-3), this protein is Elongation factor Tu.